The sequence spans 336 residues: Protein-glutamate methylesterase/protein-glutamine glutaminase 1 (336 aa).

The region spanning K2–L119 is the Response regulatory domain. Position 53 is a 4-aspartylphosphate (D53). Positions P143 to K336 constitute a CheB-type methylesterase domain. Catalysis depends on residues S159, H186, and D279.

It belongs to the CheB family. In terms of processing, phosphorylated by CheA. Phosphorylation of the N-terminal regulatory domain activates the methylesterase activity.

The protein resides in the cytoplasm. The catalysed reaction is [protein]-L-glutamate 5-O-methyl ester + H2O = L-glutamyl-[protein] + methanol + H(+). It carries out the reaction L-glutaminyl-[protein] + H2O = L-glutamyl-[protein] + NH4(+). Involved in chemotaxis. Part of a chemotaxis signal transduction system that modulates chemotaxis in response to various stimuli. Catalyzes the demethylation of specific methylglutamate residues introduced into the chemoreceptors (methyl-accepting chemotaxis proteins or MCP) by CheR. Also mediates the irreversible deamidation of specific glutamine residues to glutamic acid. The polypeptide is Protein-glutamate methylesterase/protein-glutamine glutaminase 1 (Pseudomonas fluorescens (strain ATCC BAA-477 / NRRL B-23932 / Pf-5)).